The chain runs to 80 residues: Cell division protein ZapB (80 aa).

The stretch at 3–80 (FEVLEQLEAK…NLLGKMDDVE (78 aa)) forms a coiled coil.

This sequence belongs to the ZapB family. In terms of assembly, homodimer. The ends of the coiled-coil dimer bind to each other, forming polymers. Interacts with FtsZ.

It localises to the cytoplasm. Non-essential, abundant cell division factor that is required for proper Z-ring formation. It is recruited early to the divisome by direct interaction with FtsZ, stimulating Z-ring assembly and thereby promoting cell division earlier in the cell cycle. Its recruitment to the Z-ring requires functional FtsA or ZipA. This chain is Cell division protein ZapB, found in Vibrio atlanticus (strain LGP32) (Vibrio splendidus (strain Mel32)).